A 650-amino-acid chain; its full sequence is Epithelial sodium channel subunit gamma (650 aa).

The Cytoplasmic portion of the chain corresponds to 1–55; sequence MAPGEKIKAKIKKNLPVRGPQAPTIKDLMHWYCMNTNTHGCRRIVVSRGRLRRLL. The helical transmembrane segment at 56–76 threads the bilayer; the sequence is WIAFTLTAVALIIWQCALLVF. Over 77-542 the chain is Extracellular; the sequence is SFYTVSVSIK…GGQLGLWMSC (466 aa). 8 cysteine pairs are disulfide-bonded: cysteine 100–cysteine 284, cysteine 208–cysteine 215, cysteine 261–cysteine 268, cysteine 373–cysteine 458, cysteine 395–cysteine 454, cysteine 399–cysteine 450, cysteine 408–cysteine 435, and cysteine 410–cysteine 424. Positions 135 to 222 are gating release of inhibition by proteolysis (GRIP); protease-sensitive region that is responsible for the proteolytic activation of the channel; the sequence is RKRREAGSMP…SDCATYTFSS (88 aa). An N-linked (GlcNAc...) asparagine glycan is attached at asparagine 210. The N-linked (GlcNAc...) asparagine glycan is linked to asparagine 272. A glycan (N-linked (GlcNAc...) asparagine) is linked at asparagine 498. The helical transmembrane segment at 543–563 threads the bilayer; the sequence is SVVCVIEIIEVFFIDFFSIIA. The Cytoplasmic segment spans residues 564-650; it reads RRQWHKAKDW…LTDTQLTNEL (87 aa). The disordered stretch occupies residues 577–628; it reads RQTPPSTETPSSRQGQDNPALDTDDDLPTFTSAMRLPPAPGSTVPGTPPPRY. Positions 579–593 are enriched in polar residues; it reads TPPSTETPSSRQGQD. A PY motif; mediates interaction, ubiquitination and inhibition by NEDD4 and NEDD4L motif is present at residues 624–628; that stretch reads PPPRY. A PY motif; recruits WW domain-containing proteins and is thereby required for ubiquitination and inhibition of the channel by NEDD4 and NEDD4L motif is present at residues 624–628; that stretch reads PPPRY.

The protein belongs to the amiloride-sensitive sodium channel (TC 1.A.6) family. SCNN1G subfamily. In terms of assembly, component of the heterotrimeric epithelial sodium channel (ENaC) composed of an alpha/SCNN1A, a beta/SCNN1B and a gamma/SCNN1G subunit. Interacts with WWP1 (via WW domains). Interacts with WWP2 (via WW domains); inhibits the channel. Interacts with the full-length immature form of PCSK9 (pro-PCSK9); inhibits ENaC by promoting its proteasomal degradation. Interacts with BPIFA1; the interaction is indirect via SCNN1B and inhibits the proteolytic maturation of SCNN1A and SCNN1G and the activation of ENaC. Post-translationally, phosphorylated on serine and threonine residues. Aldosterone and insulin increase the basal level of phosphorylation. Ubiquitinated. Can be ubiquitinated at multiple sites and undergo monoubiquitination and polyubiquitination. Ubiquitination by NEDD4 or NEDD4L inhibits the ENaC channel through endocytosis, intracellular retention and degradation of its individual subunits. In terms of processing, ENaC is activated through the proteolytic maturation of its subunits. Furin cleaves the SCNN1G subunit first, followed by cleavage by prostasin (PRSS8), which results in a stepwise increase in the open probability of the channel due to the release of an inhibitory tract. BPIFA1, which is recruited by the SCNN1B subunit, prevents the proteolytic activation of ENaC. Post-translationally, N-glycosylated. N-linked glycans are processed to complex type during ENaC complex assembly and transport to the plasma membrane.

The protein localises to the apical cell membrane. The catalysed reaction is Na(+)(in) = Na(+)(out). Originally identified and characterized by its inhibition by the diuretic drug amiloride. In terms of biological role, this is one of the three pore-forming subunits of the heterotrimeric epithelial sodium channel (ENaC), a critical regulator of sodium balance and fluid homeostasis. ENaC operates in epithelial tissues, where it mediates the electrodiffusion of sodium ions from extracellular fluid through the apical membrane of cells, with water following osmotically. It plays a key role in maintaining sodium homeostasis through electrogenic sodium reabsorption in the kidneys. Additionally, ENaC is essential for airway surface liquid homeostasis, which is crucial for proper mucus clearance. This Rattus norvegicus (Rat) protein is Epithelial sodium channel subunit gamma.